The primary structure comprises 51 residues: uncharacterized protein (51 aa).

Residues 20–42 (NFFSRMWNAVVFGFGAAIGASVA) form a helical membrane-spanning segment.

Its subcellular location is the membrane. This is an uncharacterized protein from Schizosaccharomyces pombe (strain 972 / ATCC 24843) (Fission yeast).